The sequence spans 309 residues: ATP-dependent Clp protease proteolytic subunit 3, chloroplastic (309 aa).

The N-terminal 70 residues, 1–70 (MEMSLRLASS…WDVSSFSIDS (70 aa)), are a transit peptide targeting the chloroplast. At valine 71 the chain carries N-acetylvaline. Catalysis depends on serine 164, which acts as the Nucleophile. Residue histidine 189 is part of the active site. A Phosphothreonine modification is found at threonine 194. The tract at residues 290–309 (DNTNLPSERSMTQNGYAAIE) is disordered. The span at 292–309 (TNLPSERSMTQNGYAAIE) shows a compositional bias: polar residues.

Belongs to the peptidase S14 family. In terms of assembly, component of the chloroplastic Clp protease core complex which consist of at least 16 proteins: CLPP4 (3 copies), CLPP5 (3 copies), CLPR4 (2 copies), ClpP1 (1 copy), CLPP6 (1 copy), CLPR2 (1 copy), CLPT1 (1 copy), CLPT2 (1 copy) and 3 copies of CLPP3 and/or CLPR1 and/or CLPR3. The core complex is organized in two heptameric rings, one containing CLPP3,4,5,6 in a 1:2:3:1 ratio and the other CLPP1 and CLPR1,2,3,4 in a 3:1:1:1:1 ratio. Interacts with CHIP. Post-translationally, ubiquitinated in vitro by CHIP. In terms of tissue distribution, mostly expressed in leaves. Also detected in stems, and to a lower extent, in roots (at protein level).

The protein resides in the plastid. The protein localises to the chloroplast stroma. It catalyses the reaction Hydrolysis of proteins to small peptides in the presence of ATP and magnesium. alpha-casein is the usual test substrate. In the absence of ATP, only oligopeptides shorter than five residues are hydrolyzed (such as succinyl-Leu-Tyr-|-NHMec, and Leu-Tyr-Leu-|-Tyr-Trp, in which cleavage of the -Tyr-|-Leu- and -Tyr-|-Trp bonds also occurs).. Its function is as follows. Cleaves peptides in various proteins in a process that requires ATP hydrolysis. Has a chymotrypsin-like activity. Plays a major role in the degradation of misfolded proteins. In the absence of CLPP3, modified ClpPR core(s) could be formed, albeit at strongly reduced levels. This Arabidopsis thaliana (Mouse-ear cress) protein is ATP-dependent Clp protease proteolytic subunit 3, chloroplastic.